Reading from the N-terminus, the 316-residue chain is Glutathione synthetase (316 aa).

The region spanning 125 to 310 (KLFTAWFSDL…ITGMLMDAIE (186 aa)) is the ATP-grasp domain. An ATP-binding site is contributed by 151 to 207 (WEKHSDIILKPLDGMGGASIFRVKEGDPNLGVIAETLTEHGTCYCMAQNYLPAIKDG). Positions 281 and 283 each coordinate Mg(2+).

It belongs to the prokaryotic GSH synthase family. Requires Mg(2+) as cofactor. The cofactor is Mn(2+).

It carries out the reaction gamma-L-glutamyl-L-cysteine + glycine + ATP = glutathione + ADP + phosphate + H(+). It functions in the pathway sulfur metabolism; glutathione biosynthesis; glutathione from L-cysteine and L-glutamate: step 2/2. The chain is Glutathione synthetase from Shigella flexneri.